A 731-amino-acid polypeptide reads, in one-letter code: E3 ubiquitin-protein ligase SMURF1 (731 aa).

The 120-residue stretch at 1-120 (MSNPGTRRNG…TGYQRLDLCK (120 aa)) folds into the C2 domain. Position 200 is a phosphoserine (Ser200). Positions 216–237 (EVRGPLQTPQNRPHGHQSPELP) are disordered. WW domains are found at residues 234 to 267 (PELP…DPRI) and 280 to 313 (GPLP…DPRL). Residues Lys355 and Lys357 each participate in a glycyl lysine isopeptide (Lys-Gly) (interchain with G-Cter in ubiquitin) cross-link. The HECT domain occupies 394 to 731 (RPKDLKKRLM…VEETCGFAVE (338 aa)). Residue Cys699 is the Glycyl thioester intermediate of the active site.

Interacts with TRAF4. Interacts (via HECT domain) with FBXL15 (via LRR repeats). Interacts with SMAD7 and TGFBR1; SMAD7 recruits SMURF1 to TGFBR1 and regulates TGF-beta receptor degradation. Interacts with MAVS; the interaction is mediated by NDFIP1. Auto-ubiquitinated in presence of NDFIP1. Ubiquitinated by the SCF(FBXL15) complex at Lys-355 and Lys-357, leading to its degradation by the proteasome. Lys-357 is the primary ubiquitination site.

The protein resides in the cytoplasm. The protein localises to the cell membrane. The enzyme catalyses S-ubiquitinyl-[E2 ubiquitin-conjugating enzyme]-L-cysteine + [acceptor protein]-L-lysine = [E2 ubiquitin-conjugating enzyme]-L-cysteine + N(6)-ubiquitinyl-[acceptor protein]-L-lysine.. Its pathway is protein modification; protein ubiquitination. E3 ubiquitin-protein ligase that acts as a negative regulator of BMP signaling pathway. Mediates ubiquitination and degradation of SMAD1 and SMAD5, 2 receptor-regulated SMADs specific for the BMP pathway. Promotes ubiquitination and subsequent proteasomal degradation of TRAF family members and RHOA. Promotes ubiquitination and subsequent proteasomal degradation of MAVS. Acts as an antagonist of TGF-beta signaling by ubiquitinating TGFBR1 and targeting it for degradation. Plays a role in dendrite formation by melanocytes. This chain is E3 ubiquitin-protein ligase SMURF1 (Smurf1), found in Mus musculus (Mouse).